Reading from the N-terminus, the 162-residue chain is SsrA-binding protein (162 aa).

Basic and acidic residues predominate over residues 137–154 (HDKREDTKAREWDREKAR). Positions 137-162 (HDKREDTKAREWDREKARIMKNKHRG) are disordered.

Belongs to the SmpB family.

Its subcellular location is the cytoplasm. In terms of biological role, required for rescue of stalled ribosomes mediated by trans-translation. Binds to transfer-messenger RNA (tmRNA), required for stable association of tmRNA with ribosomes. tmRNA and SmpB together mimic tRNA shape, replacing the anticodon stem-loop with SmpB. tmRNA is encoded by the ssrA gene; the 2 termini fold to resemble tRNA(Ala) and it encodes a 'tag peptide', a short internal open reading frame. During trans-translation Ala-aminoacylated tmRNA acts like a tRNA, entering the A-site of stalled ribosomes, displacing the stalled mRNA. The ribosome then switches to translate the ORF on the tmRNA; the nascent peptide is terminated with the 'tag peptide' encoded by the tmRNA and targeted for degradation. The ribosome is freed to recommence translation, which seems to be the essential function of trans-translation. The protein is SsrA-binding protein of Aeromonas salmonicida (strain A449).